The chain runs to 717 residues: Acetone carboxylase beta subunit (717 aa).

Heterohexamer of two alpha, two beta and two gamma subunits. Fe cation serves as cofactor. The cofactor is Mg(2+). Requires Zn(2+) as cofactor. The N-terminus is blocked.

It catalyses the reaction acetone + hydrogencarbonate + 2 ATP + 3 H2O = acetoacetate + 2 AMP + 4 phosphate + 4 H(+). In terms of biological role, catalyzes the carboxylation of acetone to form acetoacetate. Has a reduced activity on butanone, and no activity on 2-pentatone, 3-pentatone, 2-hexanone, chloroacetone, pyruvate, phosphoenolpyruvate, acetaldehyde, propionaldehyde and propylene oxide. This Xanthobacter autotrophicus (strain ATCC BAA-1158 / Py2) protein is Acetone carboxylase beta subunit.